A 479-amino-acid chain; its full sequence is Proline--tRNA ligase (479 aa).

Belongs to the class-II aminoacyl-tRNA synthetase family. ProS type 3 subfamily. Homodimer.

Its subcellular location is the cytoplasm. The enzyme catalyses tRNA(Pro) + L-proline + ATP = L-prolyl-tRNA(Pro) + AMP + diphosphate. In terms of biological role, catalyzes the attachment of proline to tRNA(Pro) in a two-step reaction: proline is first activated by ATP to form Pro-AMP and then transferred to the acceptor end of tRNA(Pro). This Mesomycoplasma hyopneumoniae (strain 7448) (Mycoplasma hyopneumoniae) protein is Proline--tRNA ligase.